Reading from the N-terminus, the 1407-residue chain is DNA-directed RNA polymerase subunit beta' (1407 aa).

Zn(2+) contacts are provided by Cys70, Cys72, Cys85, and Cys88. 3 residues coordinate Mg(2+): Asp460, Asp462, and Asp464. Zn(2+) contacts are provided by Cys814, Cys888, Cys895, and Cys898. Lys972 is modified (N6-acetyllysine).

The protein belongs to the RNA polymerase beta' chain family. The RNAP catalytic core consists of 2 alpha, 1 beta, 1 beta' and 1 omega subunit. When a sigma factor is associated with the core the holoenzyme is formed, which can initiate transcription. It depends on Mg(2+) as a cofactor. Zn(2+) serves as cofactor.

It catalyses the reaction RNA(n) + a ribonucleoside 5'-triphosphate = RNA(n+1) + diphosphate. DNA-dependent RNA polymerase catalyzes the transcription of DNA into RNA using the four ribonucleoside triphosphates as substrates. The chain is DNA-directed RNA polymerase subunit beta' from Escherichia coli O1:K1 / APEC.